Consider the following 498-residue polypeptide: Protein YhjJ (498 aa).

The signal sequence occupies residues 1 to 24; that stretch reads MQGTKIRLLAGGLLMMATAGYVQA.

Belongs to the peptidase M16 family.

It localises to the periplasm. The polypeptide is Protein YhjJ (yhjJ) (Escherichia coli (strain K12)).